Consider the following 62-residue polypeptide: Photosystem II reaction center protein Z (62 aa).

2 helical membrane passes run threonine 8–alanine 28 and phenylalanine 41–valine 61.

Belongs to the PsbZ family. In terms of assembly, PSII is composed of 1 copy each of membrane proteins PsbA, PsbB, PsbC, PsbD, PsbE, PsbF, PsbH, PsbI, PsbJ, PsbK, PsbL, PsbM, PsbT, PsbY, PsbZ, Psb30/Ycf12, at least 3 peripheral proteins of the oxygen-evolving complex and a large number of cofactors. It forms dimeric complexes.

The protein localises to the plastid. It localises to the chloroplast thylakoid membrane. Functionally, may control the interaction of photosystem II (PSII) cores with the light-harvesting antenna, regulates electron flow through the 2 photosystem reaction centers. PSII is a light-driven water plastoquinone oxidoreductase, using light energy to abstract electrons from H(2)O, generating a proton gradient subsequently used for ATP formation. In Mesostigma viride (Green alga), this protein is Photosystem II reaction center protein Z.